A 694-amino-acid chain; its full sequence is Elongation factor G (694 aa).

One can recognise a tr-type G domain in the interval 8-287 (EDYRNFGIMA…AVISYLPSPV (280 aa)). GTP is bound by residues 17–24 (AHIDAGKT), 86–90 (DTPGH), and 140–143 (NKMD).

Belongs to the TRAFAC class translation factor GTPase superfamily. Classic translation factor GTPase family. EF-G/EF-2 subfamily.

The protein resides in the cytoplasm. Functionally, catalyzes the GTP-dependent ribosomal translocation step during translation elongation. During this step, the ribosome changes from the pre-translocational (PRE) to the post-translocational (POST) state as the newly formed A-site-bound peptidyl-tRNA and P-site-bound deacylated tRNA move to the P and E sites, respectively. Catalyzes the coordinated movement of the two tRNA molecules, the mRNA and conformational changes in the ribosome. The sequence is that of Elongation factor G from Bartonella quintana (strain Toulouse) (Rochalimaea quintana).